The sequence spans 110 residues: T cell receptor alpha variable 39 (110 aa).

An N-terminal signal peptide occupies residues 1–18 (MKKLLAMILWLQLDRLSG). Residues 19–110 (ELKVEQNPLF…LSATYFCAVD (92 aa)) form the Ig-like domain. 2 N-linked (GlcNAc...) asparagine glycosylation sites follow: Asn36 and Asn42. The cysteines at positions 41 and 107 are disulfide-linked.

As to quaternary structure, alpha-beta TR is a heterodimer composed of an alpha and beta chain; disulfide-linked. The alpha-beta TR is associated with the transmembrane signaling CD3 coreceptor proteins to form the TR-CD3 (TcR or TCR). The assembly of alpha-beta TR heterodimers with CD3 occurs in the endoplasmic reticulum where a single alpha-beta TR heterodimer associates with one CD3D-CD3E heterodimer, one CD3G-CD3E heterodimer and one CD247 homodimer forming a stable octameric structure. CD3D-CD3E and CD3G-CD3E heterodimers preferentially associate with TR alpha and TR beta chains, respectively. The association of the CD247 homodimer is the last step of TcR assembly in the endoplasmic reticulum and is required for transport to the cell surface.

Its subcellular location is the cell membrane. Functionally, v region of the variable domain of T cell receptor (TR) alpha chain that participates in the antigen recognition. Alpha-beta T cell receptors are antigen specific receptors which are essential to the immune response and are present on the cell surface of T lymphocytes. Recognize peptide-major histocompatibility (MH) (pMH) complexes that are displayed by antigen presenting cells (APC), a prerequisite for efficient T cell adaptive immunity against pathogens. Binding of alpha-beta TR to pMH complex initiates TR-CD3 clustering on the cell surface and intracellular activation of LCK that phosphorylates the ITAM motifs of CD3G, CD3D, CD3E and CD247 enabling the recruitment of ZAP70. In turn ZAP70 phosphorylates LAT, which recruits numerous signaling molecules to form the LAT signalosome. The LAT signalosome propagates signal branching to three major signaling pathways, the calcium, the mitogen-activated protein kinase (MAPK) kinase and the nuclear factor NF-kappa-B (NF-kB) pathways, leading to the mobilization of transcription factors that are critical for gene expression and essential for T cell growth and differentiation. The T cell repertoire is generated in the thymus, by V-(D)-J rearrangement. This repertoire is then shaped by intrathymic selection events to generate a peripheral T cell pool of self-MH restricted, non-autoaggressive T cells. Post-thymic interaction of alpha-beta TR with the pMH complexes shapes TR structural and functional avidity. This Homo sapiens (Human) protein is T cell receptor alpha variable 39.